A 374-amino-acid polypeptide reads, in one-letter code: Spore germination protein GerLB (374 aa).

Helical transmembrane passes span 16–36, 44–64, 86–106, 122–142, 149–169, 192–212, 227–247, 279–301, 313–333, and 341–361; these read IGFA…PRDI, DGWI…WFVT, PVAY…TAYE, TPIQ…IAGS, LNVL…LLNI, VKNS…AVLL, AVMV…SVFT, FFTT…ASLL, IFIF…SSLN, and YLAW…LIVY.

The protein belongs to the amino acid-polyamine-organocation (APC) superfamily. Spore germination protein (SGP) (TC 2.A.3.9) family.

The protein localises to the membrane. Contributes to the L-alanine germination response. The polypeptide is Spore germination protein GerLB (gerLB) (Bacillus cereus).